Consider the following 431-residue polypeptide: Adenylosuccinate synthetase (431 aa).

GTP is bound by residues 13 to 19 (GDEGKGK) and 41 to 43 (GHT). The active-site Proton acceptor is the aspartate 14. The Mg(2+) site is built by aspartate 14 and glycine 41. IMP contacts are provided by residues 14–17 (DEGK), 39–42 (NAGH), threonine 130, arginine 144, glutamine 225, threonine 240, and arginine 304. The Proton donor role is filled by histidine 42. 300–306 (SVTGRPR) lines the substrate pocket. GTP is bound by residues arginine 306, 332–334 (KLD), and 414–416 (STG).

This sequence belongs to the adenylosuccinate synthetase family. As to quaternary structure, homodimer. Requires Mg(2+) as cofactor.

It localises to the cytoplasm. The catalysed reaction is IMP + L-aspartate + GTP = N(6)-(1,2-dicarboxyethyl)-AMP + GDP + phosphate + 2 H(+). The protein operates within purine metabolism; AMP biosynthesis via de novo pathway; AMP from IMP: step 1/2. Plays an important role in the de novo pathway of purine nucleotide biosynthesis. Catalyzes the first committed step in the biosynthesis of AMP from IMP. This Bordetella avium (strain 197N) protein is Adenylosuccinate synthetase.